The following is a 338-amino-acid chain: Fructose-1,6-bisphosphatase 1 (338 aa).

Ala2 carries the post-translational modification N-acetylalanine. AMP-binding positions include 18–22 and 28–32; these read VMEEG and TGEMT. 2 residues coordinate Mg(2+): Asp69 and Glu98. 113–114 serves as a coordination point for AMP; the sequence is KY. 3 residues coordinate Mg(2+): Asp119, Leu121, and Asp122. 122 to 125 provides a ligand contact to substrate; that stretch reads DGSS. Arg141 contacts AMP. Lys151 is modified (N6-succinyllysine). Substrate is bound by residues 213 to 216, 244 to 249, Tyr265, and 275 to 277; these read NEGY, RYVGSM, and KLR. Phosphotyrosine is present on residues Tyr216, Tyr245, and Tyr265. Mg(2+) is bound at residue Glu281.

This sequence belongs to the FBPase class 1 family. As to quaternary structure, homotetramer. Requires Mg(2+) as cofactor.

It catalyses the reaction beta-D-fructose 1,6-bisphosphate + H2O = beta-D-fructose 6-phosphate + phosphate. The protein operates within carbohydrate biosynthesis; gluconeogenesis. Its activity is regulated as follows. Subject to complex allosteric regulation. The enzyme can assume an active R-state, or an inactive T-state. Intermediate conformations may exist. AMP acts as an allosteric inhibitor. AMP binding affects the turnover of bound substrate and not the affinity for substrate. Fructose 2,6-bisphosphate acts as a competitive inhibitor. Fructose 2,6-bisphosphate and AMP have synergistic effects. Its function is as follows. Catalyzes the hydrolysis of fructose 1,6-bisphosphate to fructose 6-phosphate in the presence of divalent cations, acting as a rate-limiting enzyme in gluconeogenesis. Plays a role in regulating glucose sensing and insulin secretion of pancreatic beta-cells. Appears to modulate glycerol gluconeogenesis in liver. Important regulator of appetite and adiposity; increased expression of the protein in liver after nutrient excess increases circulating satiety hormones and reduces appetite-stimulating neuropeptides and thus seems to provide a feedback mechanism to limit weight gain. The polypeptide is Fructose-1,6-bisphosphatase 1 (FBP1) (Oryctolagus cuniculus (Rabbit)).